The primary structure comprises 419 residues: Putative zinc metalloprotease spr0242 (419 aa).

His-18 provides a ligand contact to Zn(2+). Residue Glu-19 is part of the active site. His-22 contacts Zn(2+). The next 3 membrane-spanning stretches (helical) occupy residues 169-191 (LITN…WVLI), 345-367 (ILYF…IPAL), and 388-410 (EIET…AVTW).

Belongs to the peptidase M50B family. Zn(2+) serves as cofactor.

It localises to the cell membrane. The sequence is that of Putative zinc metalloprotease spr0242 from Streptococcus pneumoniae (strain ATCC BAA-255 / R6).